Reading from the N-terminus, the 555-residue chain is MIWVAVVITMLLFILVAKPTGIYLEKAFQGSKKLDKVFGPFEKLIFKITGVKGYNQTWKQYALSLVLLNGFMIVVVYFIFRLQGVLPLNPAHIEGMEPTLAFNTAISFMADTNLQHYSGENGLSYLSQLIGITFLMFAAPATTLAIVMAFIRGLAGKELGNFFVDFTRALTRVFLPIAFIAALVFVALGVPQTLDGAVTAQTIDGAKQSILRGPVASFVSIKELGNNGGGFFGANSTHPFENPGQMSNILQMMLMMLLPTALPFTYGRMVGNKKQGRILFVSLFMVFLLGFITITTSELHGNPVLNGMGIEHVQGSTEGKEVRFGTVFSSLYATVTTAAETGAVNTMHDTLTPIGGLVPLVNMMLNTVYGGVGAGFVNIIMYAIIAVFISGLMVGRTPEFLGKKIEGKEMKLIAVTILFHPLLILGFSALALSTSLGTDAISHSGFHGLTQVVYEYTSSAANNGSGFEGLGDNTPFWNITTGLVMFLGRYFSLITMLAVAASLKEKTVVPETVGTFRTDNGLFGGIFIGTIVIVGALTFFPMLVLGPIAEFLTLK.

10 helical membrane passes run 2-22 (IWVAVVITMLLFILVAKPTGI), 60-80 (QYALSLVLLNGFMIVVVYFIF), 130-150 (IGITFLMFAAPATTLAIVMAF), 173-193 (VFLPIAFIAALVFVALGVPQT), 246-266 (MSNILQMMLMMLLPTALPFTY), 278-298 (ILFVSLFMVFLLGFITITTSE), 374-394 (AGFVNIIMYAIIAVFISGLMV), 412-432 (LIAVTILFHPLLILGFSALAL), 483-503 (LVMFLGRYFSLITMLAVAASL), and 525-545 (GIFIGTIVIVGALTFFPMLVL).

This sequence belongs to the KdpA family. In terms of assembly, the system is composed of three essential subunits: KdpA, KdpB and KdpC.

It localises to the cell membrane. Its function is as follows. Part of the high-affinity ATP-driven potassium transport (or Kdp) system, which catalyzes the hydrolysis of ATP coupled with the electrogenic transport of potassium into the cytoplasm. This subunit binds the extracellular potassium ions and delivers the ions to the membrane domain of KdpB through an intramembrane tunnel. In Bacillus mycoides (strain KBAB4) (Bacillus weihenstephanensis), this protein is Potassium-transporting ATPase potassium-binding subunit.